A 610-amino-acid polypeptide reads, in one-letter code: Phosphoenolpyruvate carboxykinase [GTP] (610 aa).

Residues Arg82 and 221–223 (YGG) contribute to the substrate site. Mn(2+) contacts are provided by Lys230 and His250. Ser272 provides a ligand contact to substrate. 273-278 (ACGKTN) contributes to the GTP binding site. Cys274 is a catalytic residue. Asp297 provides a ligand contact to Mn(2+). A substrate-binding site is contributed by 387-389 (NSR). Residues Arg389, Arg420, and 515–518 (FGDN) contribute to the GTP site.

This sequence belongs to the phosphoenolpyruvate carboxykinase [GTP] family. In terms of assembly, monomer. Mn(2+) serves as cofactor.

Its subcellular location is the cytoplasm. It catalyses the reaction oxaloacetate + GTP = phosphoenolpyruvate + GDP + CO2. The protein operates within carbohydrate biosynthesis; gluconeogenesis. Its function is as follows. Involved in the gluconeogenesis. Catalyzes the conversion of oxaloacetate (OAA) to phosphoenolpyruvate (PEP), the rate-limiting step in the metabolic pathway that produces glucose from lactate and other precursors derived from the citric acid cycle. The sequence is that of Phosphoenolpyruvate carboxykinase [GTP] from Corynebacterium glutamicum (strain ATCC 13032 / DSM 20300 / JCM 1318 / BCRC 11384 / CCUG 27702 / LMG 3730 / NBRC 12168 / NCIMB 10025 / NRRL B-2784 / 534).